Consider the following 119-residue polypeptide: UPF0231 protein ECA3777 (119 aa).

The protein belongs to the UPF0231 family.

The chain is UPF0231 protein ECA3777 from Pectobacterium atrosepticum (strain SCRI 1043 / ATCC BAA-672) (Erwinia carotovora subsp. atroseptica).